The sequence spans 270 residues: Ribosomal RNA-processing protein 7 homolog (270 aa).

Residues 233 to 268 (TFQIKKNRQEKAQELLKKFEEDRKRITQLKQARNFK) adopt a coiled-coil conformation.

Belongs to the RRP7 family.

The protein is Ribosomal RNA-processing protein 7 homolog of Caenorhabditis elegans.